Reading from the N-terminus, the 925-residue chain is Protein translocase subunit SecA (925 aa).

Residues Q87, G105–T109, and D515 contribute to the ATP site. Residues C909, C911, C920, and H921 each contribute to the Zn(2+) site.

Belongs to the SecA family. In terms of assembly, monomer and homodimer. Part of the essential Sec protein translocation apparatus which comprises SecA, SecYEG and auxiliary proteins SecDF-YajC and YidC. Requires Zn(2+) as cofactor.

The protein resides in the cell inner membrane. The protein localises to the cytoplasm. It catalyses the reaction ATP + H2O + cellular proteinSide 1 = ADP + phosphate + cellular proteinSide 2.. Functionally, part of the Sec protein translocase complex. Interacts with the SecYEG preprotein conducting channel. Has a central role in coupling the hydrolysis of ATP to the transfer of proteins into and across the cell membrane, serving both as a receptor for the preprotein-SecB complex and as an ATP-driven molecular motor driving the stepwise translocation of polypeptide chains across the membrane. The protein is Protein translocase subunit SecA of Cupriavidus taiwanensis (strain DSM 17343 / BCRC 17206 / CCUG 44338 / CIP 107171 / LMG 19424 / R1) (Ralstonia taiwanensis (strain LMG 19424)).